We begin with the raw amino-acid sequence, 955 residues long: Iron-responsive element-binding protein 2 (955 aa).

Positions 504, 570, and 573 each coordinate [4Fe-4S] cluster.

It belongs to the aconitase/IPM isomerase family. [4Fe-4S] cluster is required as a cofactor. Post-translationally, ubiquitinated and degraded by the proteasome in presence of high level of iron and oxygen.

Its subcellular location is the cytoplasm. In terms of biological role, RNA-binding protein that binds to iron-responsive elements (IRES), which are stem-loop structures found in the 5'-UTR of ferritin, and delta aminolevulinic acid synthase mRNAs, and in the 3'-UTR of transferrin receptor mRNA. Binding to the IRE element in ferritin results in the repression of its mRNA translation. Binding of the protein to the transferrin receptor mRNA inhibits the degradation of this otherwise rapidly degraded mRNA. The polypeptide is Iron-responsive element-binding protein 2 (ireb2) (Xenopus laevis (African clawed frog)).